The chain runs to 334 residues: Flotillin-like protein FloA (334 aa).

The helical transmembrane segment at 3-23 (LYLIFLIVVGVVGLVLVGLFL) threads the bilayer.

Belongs to the flotillin-like FloA family. Homooligomerizes.

Its subcellular location is the cell membrane. It is found in the membrane raft. Found in functional membrane microdomains (FMM) that may be equivalent to eukaryotic membrane rafts. FMMs are highly dynamic and increase in number as cells age. Flotillins are thought to be important factors in membrane fluidity. The protein is Flotillin-like protein FloA of Opitutus terrae (strain DSM 11246 / JCM 15787 / PB90-1).